The following is a 384-amino-acid chain: Magnesium transporter MRS2-I (384 aa).

The next 2 membrane-spanning stretches (helical) occupy residues 319 to 339 (LFLS…GIFG) and 356 to 376 (WVVL…VAYA). Positions 339–341 (GMN) match the Required for magnesium transport activity motif.

The protein belongs to the CorA metal ion transporter (MIT) (TC 1.A.35.5) family.

It localises to the membrane. Magnesium transporter that may mediate the influx of magnesium. The sequence is that of Magnesium transporter MRS2-I (MRS2-I) from Oryza sativa subsp. japonica (Rice).